A 594-amino-acid polypeptide reads, in one-letter code: Probable translation initiation factor IF-2 (594 aa).

The tr-type G domain maps to 5–224 (YRAPIVVVVG…LMAGLTQRLV (220 aa)). A G1 region spans residues 14-21 (GHVDVGKT). Position 14 to 21 (14 to 21 (GHVDVGKT)) interacts with GTP. Positions 39-43 (MITQH) are G2. A G3 region spans residues 80-83 (DTPG). GTP-binding positions include 80-84 (DTPGH) and 134-137 (NKVD). The tract at residues 134–137 (NKVD) is G4. Residues 202 to 204 (SAV) form a G5 region.

It belongs to the TRAFAC class translation factor GTPase superfamily. Classic translation factor GTPase family. IF-2 subfamily.

Function in general translation initiation by promoting the binding of the formylmethionine-tRNA to ribosomes. Seems to function along with eIF-2. This chain is Probable translation initiation factor IF-2, found in Caldivirga maquilingensis (strain ATCC 700844 / DSM 13496 / JCM 10307 / IC-167).